Reading from the N-terminus, the 409-residue chain is NADH-quinone oxidoreductase subunit D (409 aa).

The protein belongs to the complex I 49 kDa subunit family. As to quaternary structure, NDH-1 is composed of 14 different subunits. Subunits NuoB, C, D, E, F, and G constitute the peripheral sector of the complex.

The protein resides in the cell inner membrane. It carries out the reaction a quinone + NADH + 5 H(+)(in) = a quinol + NAD(+) + 4 H(+)(out). NDH-1 shuttles electrons from NADH, via FMN and iron-sulfur (Fe-S) centers, to quinones in the respiratory chain. The immediate electron acceptor for the enzyme in this species is believed to be ubiquinone. Couples the redox reaction to proton translocation (for every two electrons transferred, four hydrogen ions are translocated across the cytoplasmic membrane), and thus conserves the redox energy in a proton gradient. This Helicobacter pylori (strain Shi470) protein is NADH-quinone oxidoreductase subunit D.